Reading from the N-terminus, the 398-residue chain is MTKEKVVLAYSGGLDTSIIIPWLKENYDLDVIAVCIDVGQDDDMEEVKKKAIKTGAVKVYVEDAKEEFVKDYVFKALKANALYEEKYMLGTSLARPLMAKKLVEIAHKEGAKYICHGCTGKGNDQVRFEVGIASFDPSIKIIAPWRIWDIKSREDAIDYAKEKGVEVPVTKKKIYSVDKNILHTSHEGGELEDPKNAHNKEMYSMVTPPEKAKDEPTYVDIYFNKGVPEKINGKEISPVELLNTLNKIGGENGVGVVDIVENRLVGMKSRGVYETPGGTILYEAHKDLESLTLDKLTLHCKQELAQKYGEIAYDGLWFTTLRESLDAFVDVTQENVTGTVKLKLYKGNIMNAGIDTKNALYDEGISSFGASELYSHKDAEGFIKLFSLPSKIKALKNK.

9 to 17 (AYSGGLDTS) is a binding site for ATP. L-citrulline contacts are provided by Tyr87 and Ser92. ATP is bound at residue Gly117. Residues Thr119, Asn123, and Asp124 each coordinate L-aspartate. Asn123 contacts L-citrulline. Arg127, Ser176, Ser185, Glu261, and Tyr273 together coordinate L-citrulline.

It belongs to the argininosuccinate synthase family. Type 1 subfamily. As to quaternary structure, homotetramer.

Its subcellular location is the cytoplasm. The catalysed reaction is L-citrulline + L-aspartate + ATP = 2-(N(omega)-L-arginino)succinate + AMP + diphosphate + H(+). Its pathway is amino-acid biosynthesis; L-arginine biosynthesis; L-arginine from L-ornithine and carbamoyl phosphate: step 2/3. The sequence is that of Argininosuccinate synthase from Clostridium tetani (strain Massachusetts / E88).